The primary structure comprises 237 residues: Sugar fermentation stimulation protein homolog (237 aa).

Belongs to the SfsA family.

The protein is Sugar fermentation stimulation protein homolog of Azorhizobium caulinodans (strain ATCC 43989 / DSM 5975 / JCM 20966 / LMG 6465 / NBRC 14845 / NCIMB 13405 / ORS 571).